Consider the following 199-residue polypeptide: Thymidine kinase (199 aa).

ATP-binding positions include 15–22 (GSMFSGKS) and 88–91 (DEVQ). Glu-89 (proton acceptor) is an active-site residue. Positions 145, 148, 183, and 186 each coordinate Zn(2+).

This sequence belongs to the thymidine kinase family. As to quaternary structure, homotetramer.

Its subcellular location is the cytoplasm. It carries out the reaction thymidine + ATP = dTMP + ADP + H(+). This Staphylococcus epidermidis (strain ATCC 12228 / FDA PCI 1200) protein is Thymidine kinase.